The following is a 192-amino-acid chain: Fe/S biogenesis protein NfuA (192 aa).

[4Fe-4S] cluster contacts are provided by Cys-149 and Cys-152.

The protein belongs to the NfuA family. As to quaternary structure, homodimer. The cofactor is [4Fe-4S] cluster.

Involved in iron-sulfur cluster biogenesis. Binds a 4Fe-4S cluster, can transfer this cluster to apoproteins, and thereby intervenes in the maturation of Fe/S proteins. Could also act as a scaffold/chaperone for damaged Fe/S proteins. The sequence is that of Fe/S biogenesis protein NfuA from Shewanella pealeana (strain ATCC 700345 / ANG-SQ1).